The primary structure comprises 475 residues: Kynureninase (475 aa).

Pyridoxal 5'-phosphate contacts are provided by residues leucine 142, threonine 143, phenylalanine 170–aspartate 173, aspartate 255, histidine 258, and tyrosine 280. An N6-(pyridoxal phosphate)lysine modification is found at lysine 281. Pyridoxal 5'-phosphate is bound by residues tryptophan 320 and asparagine 348.

It belongs to the kynureninase family. In terms of assembly, homodimer. Pyridoxal 5'-phosphate is required as a cofactor.

It is found in the cytoplasm. The catalysed reaction is L-kynurenine + H2O = anthranilate + L-alanine + H(+). The enzyme catalyses 3-hydroxy-L-kynurenine + H2O = 3-hydroxyanthranilate + L-alanine + H(+). It participates in amino-acid degradation; L-kynurenine degradation; L-alanine and anthranilate from L-kynurenine: step 1/1. It functions in the pathway cofactor biosynthesis; NAD(+) biosynthesis; quinolinate from L-kynurenine: step 2/3. Functionally, catalyzes the cleavage of L-kynurenine (L-Kyn) and L-3-hydroxykynurenine (L-3OHKyn) into anthranilic acid (AA) and 3-hydroxyanthranilic acid (3-OHAA), respectively. The sequence is that of Kynureninase (bna5) from Botryotinia fuckeliana (strain B05.10) (Noble rot fungus).